A 268-amino-acid polypeptide reads, in one-letter code: Glucosamine-6-phosphate deaminase (268 aa).

The active-site Proton acceptor; for enolization step is D67. Catalysis depends on N136, which acts as the For ring-opening step. The active-site Proton acceptor; for ring-opening step is the H138. The For ring-opening step role is filled by E143.

This sequence belongs to the glucosamine/galactosamine-6-phosphate isomerase family. NagB subfamily. Homohexamer.

The catalysed reaction is alpha-D-glucosamine 6-phosphate + H2O = beta-D-fructose 6-phosphate + NH4(+). The protein operates within amino-sugar metabolism; N-acetylneuraminate degradation; D-fructose 6-phosphate from N-acetylneuraminate: step 5/5. Its function is as follows. Catalyzes the reversible isomerization-deamination of glucosamine 6-phosphate (GlcN6P) to form fructose 6-phosphate (Fru6P) and ammonium ion. The sequence is that of Glucosamine-6-phosphate deaminase from Shewanella loihica (strain ATCC BAA-1088 / PV-4).